Reading from the N-terminus, the 210-residue chain is Ribosomal RNA large subunit methyltransferase E (210 aa).

Gly-67, Trp-69, Asp-87, Asp-103, and Asp-128 together coordinate S-adenosyl-L-methionine. Lys-168 acts as the Proton acceptor in catalysis.

This sequence belongs to the class I-like SAM-binding methyltransferase superfamily. RNA methyltransferase RlmE family.

The protein resides in the cytoplasm. It catalyses the reaction uridine(2552) in 23S rRNA + S-adenosyl-L-methionine = 2'-O-methyluridine(2552) in 23S rRNA + S-adenosyl-L-homocysteine + H(+). In terms of biological role, specifically methylates the uridine in position 2552 of 23S rRNA at the 2'-O position of the ribose in the fully assembled 50S ribosomal subunit. This Psychrobacter cryohalolentis (strain ATCC BAA-1226 / DSM 17306 / VKM B-2378 / K5) protein is Ribosomal RNA large subunit methyltransferase E.